A 388-amino-acid chain; its full sequence is Succinate--CoA ligase [ADP-forming] subunit beta (388 aa).

Positions 9–244 constitute an ATP-grasp domain; that stretch reads KEILRKFGVA…LDEEDPAEIE (236 aa). Residues Lys-46, 53 to 55, Glu-99, Ala-102, and Glu-107 each bind ATP; that span reads GRG. Mg(2+) contacts are provided by Asn-199 and Asp-213. Substrate is bound by residues Asn-264 and 321-323; that span reads GIM.

Belongs to the succinate/malate CoA ligase beta subunit family. Heterotetramer of two alpha and two beta subunits. Requires Mg(2+) as cofactor.

The enzyme catalyses succinate + ATP + CoA = succinyl-CoA + ADP + phosphate. It catalyses the reaction GTP + succinate + CoA = succinyl-CoA + GDP + phosphate. It participates in carbohydrate metabolism; tricarboxylic acid cycle; succinate from succinyl-CoA (ligase route): step 1/1. Functionally, succinyl-CoA synthetase functions in the citric acid cycle (TCA), coupling the hydrolysis of succinyl-CoA to the synthesis of either ATP or GTP and thus represents the only step of substrate-level phosphorylation in the TCA. The beta subunit provides nucleotide specificity of the enzyme and binds the substrate succinate, while the binding sites for coenzyme A and phosphate are found in the alpha subunit. In Burkholderia cenocepacia (strain ATCC BAA-245 / DSM 16553 / LMG 16656 / NCTC 13227 / J2315 / CF5610) (Burkholderia cepacia (strain J2315)), this protein is Succinate--CoA ligase [ADP-forming] subunit beta.